Reading from the N-terminus, the 265-residue chain is uncharacterized protein (265 aa).

A coiled-coil region spans residues A143 to A205.

This is an uncharacterized protein from Aquifex aeolicus (strain VF5).